We begin with the raw amino-acid sequence, 184 residues long: Fungal defensin copsin (184 aa).

The N-terminal stretch at 1–23 is a signal peptide; it reads MKLSTSLLAIVAVASTFIGNALS. A propeptide spanning residues 24-127 is cleaved from the precursor; the sequence is ATTVPGCFAE…LGRVLPVEKR (104 aa). Gln-128 carries the pyrrolidone carboxylic acid modification. Cystine bridges form between Cys-130-Cys-159, Cys-137-Cys-167, Cys-145-Cys-175, Cys-149-Cys-177, Cys-152-Cys-184, and Cys-162-Cys-181.

The protein belongs to the invertebrate defensin family. Contains a unique connectivity of 6 cysteine bonds in contrast to most other CS-alpha-beta defensins which are linked by 3 or 4 disulfide bonds. In terms of processing, disulfide bonds are essential for structural integrity and antibacterial activity, since activity is lost after treatment with reducing agents. Thanks to disulfide bonds and N-terminal pyroglutamate, the protein is extremely stable in a wide pH and temperature range and insensitive toward proteases.

It localises to the secreted. The protein localises to the target cell membrane. In terms of biological role, antimicrobial peptide that acts against Gram-positive bacteria (Listeria spp., Enterococcus spp., B.subtilis, B.anthracis, P.aeruginosa). Is not active against Gram-negative bacteria. It selectively inhibits peptidoglycan biosynthesis through complex formation with the cell wall precursor lipid II (1:1 molar ratio), probably anchoring lipid II to the membrane, thus inhibiting cell wall synthesis. The interaction with lipid II involves the third position of the pentapeptide. Shows bactericidal activity at about 2-fold minimal inhibitory concentrations (MIC), but does not form pore across the membrane. The sequence is that of Fungal defensin copsin from Coprinopsis cinerea (Inky cap fungus).